A 319-amino-acid polypeptide reads, in one-letter code: Super small secreted glycoprotein (319 aa).

The signal sequence occupies residues 1–32; sequence MGGLSLLQLPRDKFRKSSFFVWVIILFQKAFS. The N-linked (GlcNAc...) asparagine; by host glycan is linked to Asn-40. Disulfide bonds link Cys-108-Cys-135 and Cys-121-Cys-147. 5 N-linked (GlcNAc...) asparagine; by host glycosylation sites follow: Asn-204, Asn-208, Asn-238, Asn-257, and Asn-268.

It belongs to the filoviruses glycoprotein family.

Its subcellular location is the secreted. The chain is Super small secreted glycoprotein (GP) from Sudan ebolavirus (strain Human/Uganda/Gulu/2000) (SEBOV).